The following is a 184-amino-acid chain: ATP synthase subunit b, chloroplastic (184 aa).

The helical transmembrane segment at 27 to 49 threads the bilayer; sequence LATNPINLSIVIGVLIFFGKGVL.

It belongs to the ATPase B chain family. As to quaternary structure, F-type ATPases have 2 components, F(1) - the catalytic core - and F(0) - the membrane proton channel. F(1) has five subunits: alpha(3), beta(3), gamma(1), delta(1), epsilon(1). F(0) has four main subunits: a(1), b(1), b'(1) and c(10-14). The alpha and beta chains form an alternating ring which encloses part of the gamma chain. F(1) is attached to F(0) by a central stalk formed by the gamma and epsilon chains, while a peripheral stalk is formed by the delta, b and b' chains.

Its subcellular location is the plastid. The protein resides in the chloroplast thylakoid membrane. In terms of biological role, f(1)F(0) ATP synthase produces ATP from ADP in the presence of a proton or sodium gradient. F-type ATPases consist of two structural domains, F(1) containing the extramembraneous catalytic core and F(0) containing the membrane proton channel, linked together by a central stalk and a peripheral stalk. During catalysis, ATP synthesis in the catalytic domain of F(1) is coupled via a rotary mechanism of the central stalk subunits to proton translocation. Functionally, component of the F(0) channel, it forms part of the peripheral stalk, linking F(1) to F(0). This is ATP synthase subunit b, chloroplastic from Lotus japonicus (Lotus corniculatus var. japonicus).